Reading from the N-terminus, the 78-residue chain is Acyl carrier protein (78 aa).

In terms of domain architecture, Carrier spans 2–77 (SEIASRVKAI…DAVSYIEANA (76 aa)). S37 is subject to O-(pantetheine 4'-phosphoryl)serine.

It belongs to the acyl carrier protein (ACP) family. In terms of processing, 4'-phosphopantetheine is transferred from CoA to a specific serine of apo-ACP by AcpS. This modification is essential for activity because fatty acids are bound in thioester linkage to the sulfhydryl of the prosthetic group.

It is found in the cytoplasm. It participates in lipid metabolism; fatty acid biosynthesis. Functionally, carrier of the growing fatty acid chain in fatty acid biosynthesis. This chain is Acyl carrier protein, found in Phocaeicola vulgatus (strain ATCC 8482 / DSM 1447 / JCM 5826 / CCUG 4940 / NBRC 14291 / NCTC 11154) (Bacteroides vulgatus).